The chain runs to 48 residues: Sperm protamine P1 (48 aa).

Belongs to the protamine P1 family. In terms of assembly, cross-linked by interchain disulfide bonds around the DNA-helix. In terms of tissue distribution, testis.

The protein localises to the nucleus. The protein resides in the chromosome. In terms of biological role, protamines substitute for histones in the chromatin of sperm during the haploid phase of spermatogenesis. They compact sperm DNA into a highly condensed, stable and inactive complex. In Cavia porcellus (Guinea pig), this protein is Sperm protamine P1 (PRM1).